Consider the following 261-residue polypeptide: Hydroxyethylthiazole kinase (261 aa).

M45 is a substrate binding site. The ATP site is built by R121 and S167. Position 194 (G194) interacts with substrate.

The protein belongs to the Thz kinase family. Mg(2+) serves as cofactor.

It carries out the reaction 5-(2-hydroxyethyl)-4-methylthiazole + ATP = 4-methyl-5-(2-phosphooxyethyl)-thiazole + ADP + H(+). The protein operates within cofactor biosynthesis; thiamine diphosphate biosynthesis; 4-methyl-5-(2-phosphoethyl)-thiazole from 5-(2-hydroxyethyl)-4-methylthiazole: step 1/1. Catalyzes the phosphorylation of the hydroxyl group of 4-methyl-5-beta-hydroxyethylthiazole (THZ). The polypeptide is Hydroxyethylthiazole kinase (Vibrio atlanticus (strain LGP32) (Vibrio splendidus (strain Mel32))).